Reading from the N-terminus, the 241-residue chain is Uridylate kinase (241 aa).

14 to 17 (KASG) contributes to the ATP binding site. An involved in allosteric activation by GTP region spans residues 22–27 (GDQGFG). Residue Gly-56 participates in UMP binding. 2 residues coordinate ATP: Gly-57 and Arg-61. Residues Asp-76 and 137–144 (TGNPFFTT) contribute to the UMP site. ATP contacts are provided by Thr-164, Gln-165, Tyr-170, and Asp-173.

This sequence belongs to the UMP kinase family. Homohexamer.

It is found in the cytoplasm. It carries out the reaction UMP + ATP = UDP + ADP. Its pathway is pyrimidine metabolism; CTP biosynthesis via de novo pathway; UDP from UMP (UMPK route): step 1/1. Its activity is regulated as follows. Allosterically activated by GTP. Inhibited by UTP. Its function is as follows. Catalyzes the reversible phosphorylation of UMP to UDP. This chain is Uridylate kinase, found in Agrobacterium fabrum (strain C58 / ATCC 33970) (Agrobacterium tumefaciens (strain C58)).